We begin with the raw amino-acid sequence, 627 residues long: MAQEVSSSVAFIHRLLYTALRGLLGDRLKRGLKKEQVSTLYQNITLVEPRLLQPYERVIRNFLREIKLQSTEMENLAIAVKRAQDKAAIQLSELEEEMDQRIQAVENESRKDEKRKAEEALTDLRRQYETEVGDLQVTIKRLKKLEEQSRQISQKQDVTALKKQIHDLTMENQKLKKELLEAQTNVAFLQSELDALKSDYADQSLNSERDLEIIREYTEDRSSLERQIEILQTANRKLHDSNDGLRSALENTYSKLNRSLRINNISPGNTISRSSPKFNHHSSQPLAYDRSFHSSYADEDCDSLALCDPLQKMNYEVDSLPESCFDSGLSTLRDNECDSEVDYKHQGEFQTLHRTEESLGGDASDTDVPDIRDEEAFDSESVASVLHWQPQGSAGEGSTLSSSRKPISALSLQTDMVDNTSKVTSQKAYKIVLAGDAAVGKSSFLMRLCKNEFQGNTSATLGVDFQMKTLIVDGEQTVLQLWDTAGQERFRSIAKSYFRKADGVLLLYDVTCEKSFLNVREWVDMVEDGTHRTIPIMLVGNKADLRDVDNAENQKCISAYLGEKLAMTYGALFCETSAKDGSNVVEAVLHLAREVKKRTEDDDSRSITSLAGSTSKKSLQMKNCCNG.

A coiled-coil region spans residues 55 to 245 (YERVIRNFLR…RKLHDSNDGL (191 aa)). Phosphoserine occurs at positions 266 and 272. Residues 438 to 443 (AVGKSS), 541 to 544 (NKAD), and 578 to 579 (AK) contribute to the GTP site.

This sequence belongs to the small GTPase superfamily. Rab family. As to quaternary structure, homodimer. Interacts with the dynein-dynactin complex.

Its subcellular location is the cytoplasm. The protein resides in the perinuclear region. Its function is as follows. Binds predominantly GDP, and also GTP. Acts as a dynein adapter protein that activates dynein-mediated transport and dynein-dynactin motility on microtubules. The sequence is that of Ras and EF-hand domain-containing protein homolog (Rasef) from Mus musculus (Mouse).